Here is a 153-residue protein sequence, read N- to C-terminus: 6,7-dimethyl-8-ribityllumazine synthase (153 aa).

5-amino-6-(D-ribitylamino)uracil contacts are provided by residues F21, 55–57 (AFE), and 79–81 (TVI). 84–85 (AT) contacts (2S)-2-hydroxy-3-oxobutyl phosphate. H87 functions as the Proton donor in the catalytic mechanism. F112 is a binding site for 5-amino-6-(D-ribitylamino)uracil. (2S)-2-hydroxy-3-oxobutyl phosphate is bound at residue R126.

It belongs to the DMRL synthase family. Forms an icosahedral capsid composed of 60 subunits, arranged as a dodecamer of pentamers.

The catalysed reaction is (2S)-2-hydroxy-3-oxobutyl phosphate + 5-amino-6-(D-ribitylamino)uracil = 6,7-dimethyl-8-(1-D-ribityl)lumazine + phosphate + 2 H2O + H(+). It functions in the pathway cofactor biosynthesis; riboflavin biosynthesis; riboflavin from 2-hydroxy-3-oxobutyl phosphate and 5-amino-6-(D-ribitylamino)uracil: step 1/2. Its function is as follows. Catalyzes the formation of 6,7-dimethyl-8-ribityllumazine by condensation of 5-amino-6-(D-ribitylamino)uracil with 3,4-dihydroxy-2-butanone 4-phosphate. This is the penultimate step in the biosynthesis of riboflavin. In Bacillus cereus (strain B4264), this protein is 6,7-dimethyl-8-ribityllumazine synthase.